The chain runs to 222 residues: MKQESAAQSTPPPSLSPAPSAQPSWEDGDPQALWIFGYGSLVWKPDFAYSDSRVGFVRGYSRRFWQGDTFHRGSDKMPGRVVTLLEDHEGCTWGVAYQVRGEQVSEALKYLNVREAVLGGYDTKEVTFYPQDTPDQPLTALAYVATPQNPGYLGPAPEEVIATQILACRGFSGHNLEYLLRLADFMQLCGPQAQDEHLEAIVDAVGSLLPCSYLSEQPLALI.

A disordered region spans residues 1–25 (MKQESAAQSTPPPSLSPAPSAQPSW). Residue 35 to 40 (IFGYGS) coordinates substrate. Glutamate 115 acts as the Proton acceptor in catalysis.

Belongs to the gamma-glutamylcyclotransferase family. ChaC subfamily. In terms of assembly, interacts with NOTCH1 (via extracellular region).

Its subcellular location is the cytoplasm. The protein localises to the cytosol. It is found in the golgi apparatus. The protein resides in the trans-Golgi network. The enzyme catalyses glutathione = L-cysteinylglycine + 5-oxo-L-proline. Functionally, catalyzes the cleavage of glutathione into 5-oxo-L-proline and a Cys-Gly dipeptide. Acts specifically on glutathione, but not on other gamma-glutamyl peptides. Glutathione depletion is an important factor for apoptosis initiation and execution. Acts as a pro-apoptotic component of the unfolded protein response pathway by mediating the pro-apoptotic effects of the ATF4-ATF3-DDIT3/CHOP cascade. Negative regulator of Notch signaling pathway involved in embryonic neurogenesis: acts by inhibiting Notch cleavage by furin, maintaining Notch in an immature inactive form, thereby promoting neurogenesis in embryos. The chain is Glutathione-specific gamma-glutamylcyclotransferase 1 from Rattus norvegicus (Rat).